A 123-amino-acid chain; its full sequence is Large ribosomal subunit protein bL17 (123 aa).

The protein belongs to the bacterial ribosomal protein bL17 family. In terms of assembly, part of the 50S ribosomal subunit. Contacts protein L32.

This Borreliella burgdorferi (strain ATCC 35210 / DSM 4680 / CIP 102532 / B31) (Borrelia burgdorferi) protein is Large ribosomal subunit protein bL17.